The following is an 801-amino-acid chain: Mitochondrial intermediate peptidase (801 aa).

A mitochondrion-targeting transit peptide spans 1-41 (MKPQLLTPLRRRPWTCRQCLQRLQRLQQQTRRSFETAASPA). Residues 31–54 (RRSFETAASPAPGHTQVDYIPADA) form a disordered region. Position 565 (His-565) interacts with Zn(2+). Residue Glu-566 is part of the active site. Zn(2+) is bound by residues His-569 and His-572.

Belongs to the peptidase M3 family. It depends on Zn(2+) as a cofactor.

The protein localises to the mitochondrion matrix. It carries out the reaction Release of an N-terminal octapeptide as second stage of processing of some proteins imported into the mitochondrion.. Cleaves proteins, imported into the mitochondrion, to their mature size. While most mitochondrial precursor proteins are processed to the mature form in one step by mitochondrial processing peptidase (MPP), the sequential cleavage by MIP of an octapeptide after initial processing by MPP is a required step for a subgroup of nuclear-encoded precursor proteins destined for the matrix or the inner membrane. The sequence is that of Mitochondrial intermediate peptidase (oct1) from Aspergillus clavatus (strain ATCC 1007 / CBS 513.65 / DSM 816 / NCTC 3887 / NRRL 1 / QM 1276 / 107).